We begin with the raw amino-acid sequence, 149 residues long: 17 kDa major membrane protein (149 aa).

An N-terminal signal peptide occupies residues 1-19; sequence MKKIIKLSLLSLSIAGLAS. Cysteine 20 carries N-palmitoyl cysteine lipidation. A lipid anchor (S-diacylglycerol cysteine) is attached at cysteine 20.

It is found in the cell outer membrane. This Francisella tularensis subsp. holarctica (strain LVS) protein is 17 kDa major membrane protein.